The primary structure comprises 717 residues: Methionine--tRNA ligase (717 aa).

Positions proline 19–histidine 29 match the 'HIGH' region motif. 4 residues coordinate Zn(2+): cysteine 150, cysteine 153, cysteine 162, and cysteine 166. A 'KMSKS' region motif is present at residues alanine 356–serine 360. Residue threonine 359 coordinates ATP. The disordered stretch occupies residues glutamate 573 to aspartate 603. The span at glutamate 580 to glycine 590 shows a compositional bias: low complexity. A compositionally biased stretch (acidic residues) spans alanine 593–aspartate 603. Residues aspartate 619 to lysine 717 enclose the tRNA-binding domain.

Belongs to the class-I aminoacyl-tRNA synthetase family. MetG type 1 subfamily. As to quaternary structure, homodimer. It depends on Zn(2+) as a cofactor.

It is found in the cytoplasm. It catalyses the reaction tRNA(Met) + L-methionine + ATP = L-methionyl-tRNA(Met) + AMP + diphosphate. In terms of biological role, is required not only for elongation of protein synthesis but also for the initiation of all mRNA translation through initiator tRNA(fMet) aminoacylation. This chain is Methionine--tRNA ligase, found in Haloarcula marismortui (strain ATCC 43049 / DSM 3752 / JCM 8966 / VKM B-1809) (Halobacterium marismortui).